We begin with the raw amino-acid sequence, 516 residues long: tRNA-2-methylthio-N(6)-dimethylallyladenosine synthase (516 aa).

The 117-residue stretch at 17 to 133 (RSFEVRTFGC…LPSLLSRSEH (117 aa)) folds into the MTTase N-terminal domain. [4Fe-4S] cluster-binding residues include C26, C62, C96, C170, C174, and C177. The Radical SAM core domain maps to 156–392 (RESAYAGWVS…LALQERISTE (237 aa)). A TRAM domain is found at 395–466 (AKLIGTEVEL…PFFLIADSGV (72 aa)). 2 disordered regions span residues 409 to 438 (SGGRKNDKTQRMTGRSRDGRLVHFDPQGHV) and 492 to 516 (GLGLPSIGSPAQKRSETSKSSGCGC). Residues 412 to 438 (RKNDKTQRMTGRSRDGRLVHFDPQGHV) show a composition bias toward basic and acidic residues.

This sequence belongs to the methylthiotransferase family. MiaB subfamily. As to quaternary structure, monomer. The cofactor is [4Fe-4S] cluster.

The protein resides in the cytoplasm. It carries out the reaction N(6)-dimethylallyladenosine(37) in tRNA + (sulfur carrier)-SH + AH2 + 2 S-adenosyl-L-methionine = 2-methylsulfanyl-N(6)-dimethylallyladenosine(37) in tRNA + (sulfur carrier)-H + 5'-deoxyadenosine + L-methionine + A + S-adenosyl-L-homocysteine + 2 H(+). Catalyzes the methylthiolation of N6-(dimethylallyl)adenosine (i(6)A), leading to the formation of 2-methylthio-N6-(dimethylallyl)adenosine (ms(2)i(6)A) at position 37 in tRNAs that read codons beginning with uridine. The sequence is that of tRNA-2-methylthio-N(6)-dimethylallyladenosine synthase from Corynebacterium diphtheriae (strain ATCC 700971 / NCTC 13129 / Biotype gravis).